A 396-amino-acid chain; its full sequence is 8-amino-7-oxononanoate synthase (396 aa).

Substrate is bound at residue Arg-31. Residue 118–119 (GY) coordinates pyridoxal 5'-phosphate. His-143 lines the substrate pocket. Ser-189, His-217, and Thr-245 together coordinate pyridoxal 5'-phosphate. Lys-248 carries the N6-(pyridoxal phosphate)lysine modification. Thr-362 provides a ligand contact to substrate.

Belongs to the class-II pyridoxal-phosphate-dependent aminotransferase family. BioF subfamily. Homodimer. It depends on pyridoxal 5'-phosphate as a cofactor.

The catalysed reaction is 6-carboxyhexanoyl-[ACP] + L-alanine + H(+) = (8S)-8-amino-7-oxononanoate + holo-[ACP] + CO2. Its pathway is cofactor biosynthesis; biotin biosynthesis. In terms of biological role, catalyzes the decarboxylative condensation of pimeloyl-[acyl-carrier protein] and L-alanine to produce 8-amino-7-oxononanoate (AON), [acyl-carrier protein], and carbon dioxide. This is 8-amino-7-oxononanoate synthase from Methylobacillus flagellatus (strain ATCC 51484 / DSM 6875 / VKM B-1610 / KT).